The sequence spans 529 residues: Cytochrome P450 monooxygenase atmQ (529 aa).

Helical transmembrane passes span 22–42 (YPFA…QQLA) and 51–71 (SWVN…IAAF). Cys467 serves as a coordination point for heme.

The protein belongs to the cytochrome P450 family. Heme serves as cofactor.

The protein resides in the membrane. Its pathway is secondary metabolite biosynthesis. Functionally, cytochrome P450 monooxygenase; part of the ATM2 gene cluster that mediates the biosynthesis of aflatrem, a tremorgenic mycotoxin with acute neurotoxic effects. Synthesis of geranylgeranyl diphosphate (GGPP) by AtmG (a GGPP synthase) precedes condensation of GGPP with indole 3-glycerol phosphate, followed by epoxidation and cyclization by AtmM (a FAD-dependent monooxygenase) and AtmC (a prenyltransferase) to produce paspaline. AtmB is also essential for paspaline production, but its exact role has not been identified yet. AtmP, a cytochrome P450 monooxygenase, subsequently converts paspaline to 13-desoxypaxilline via PC-M6 by removal of the C-30 methyl group and oxidation at C-10. AtmQ, a cytochrome P450 monooxygenase, then catalyzes the oxidation of 13-desoxypaxilline, first at C-7 to produce paspalicine and then at C-13 to form paspalinine. Finally, AtmD prenylates paspalinine to form aflatrem. This chain is Cytochrome P450 monooxygenase atmQ, found in Aspergillus flavus.